The following is a 92-amino-acid chain: Small ribosomal subunit protein uS19 (92 aa).

The protein belongs to the universal ribosomal protein uS19 family.

Functionally, protein S19 forms a complex with S13 that binds strongly to the 16S ribosomal RNA. The sequence is that of Small ribosomal subunit protein uS19 from Borrelia hermsii (strain HS1 / DAH).